We begin with the raw amino-acid sequence, 368 residues long: Phosphate acyltransferase (368 aa).

Residues 334–368 (AAPLGESGRDADGAGQASPSAGQPAEPSAALSSKT) form a disordered region.

This sequence belongs to the PlsX family. As to quaternary structure, homodimer. Probably interacts with PlsY.

It localises to the cytoplasm. The catalysed reaction is a fatty acyl-[ACP] + phosphate = an acyl phosphate + holo-[ACP]. The protein operates within lipid metabolism; phospholipid metabolism. In terms of biological role, catalyzes the reversible formation of acyl-phosphate (acyl-PO(4)) from acyl-[acyl-carrier-protein] (acyl-ACP). This enzyme utilizes acyl-ACP as fatty acyl donor, but not acyl-CoA. The sequence is that of Phosphate acyltransferase from Burkholderia thailandensis (strain ATCC 700388 / DSM 13276 / CCUG 48851 / CIP 106301 / E264).